The primary structure comprises 429 residues: uncharacterized protein (429 aa).

The next 10 helical transmembrane spans lie at 26–46, 51–71, 99–119, 135–155, 173–193, 223–243, 278–298, 311–331, 361–381, and 407–427; these read VALT…HDIF, TGID…VGVL, LVLV…VLLI, TSFL…TLVG, FMLH…AVLP, LLVK…AHPV, TLLF…TGVV, GNIV…SGII, WWAL…GASA, and VVTA…YFVL.

It belongs to the CitM (TC 2.A.11) transporter family.

The protein localises to the cell membrane. This is an uncharacterized protein from Mycobacterium tuberculosis (strain ATCC 25618 / H37Rv).